Here is a 428-residue protein sequence, read N- to C-terminus: tRNA modification GTPase MnmE (428 aa).

(6S)-5-formyl-5,6,7,8-tetrahydrofolate contacts are provided by arginine 20, glutamate 76, and arginine 116. Positions 212–351 (GFEVAIIGAP…LVEALQDRLL (140 aa)) constitute a TrmE-type G domain. Asparagine 222 is a binding site for K(+). GTP is bound by residues 222 to 227 (NAGKST), 241 to 247 (SEVAGTT), and 266 to 269 (DTAG). Residue serine 226 coordinates Mg(2+). Serine 241, valine 243, and threonine 246 together coordinate K(+). Threonine 247 lines the Mg(2+) pocket. Residue lysine 428 coordinates (6S)-5-formyl-5,6,7,8-tetrahydrofolate.

The protein belongs to the TRAFAC class TrmE-Era-EngA-EngB-Septin-like GTPase superfamily. TrmE GTPase family. As to quaternary structure, homodimer. Heterotetramer of two MnmE and two MnmG subunits. K(+) serves as cofactor.

Its subcellular location is the cytoplasm. Its function is as follows. Exhibits a very high intrinsic GTPase hydrolysis rate. Involved in the addition of a carboxymethylaminomethyl (cmnm) group at the wobble position (U34) of certain tRNAs, forming tRNA-cmnm(5)s(2)U34. The sequence is that of tRNA modification GTPase MnmE from Cereibacter sphaeroides (strain ATCC 17025 / ATH 2.4.3) (Rhodobacter sphaeroides).